We begin with the raw amino-acid sequence, 305 residues long: Homoserine kinase (305 aa).

Residue 90 to 100 (PLARGLGSSAS) coordinates ATP.

It belongs to the GHMP kinase family. Homoserine kinase subfamily.

The protein localises to the cytoplasm. It carries out the reaction L-homoserine + ATP = O-phospho-L-homoserine + ADP + H(+). It functions in the pathway amino-acid biosynthesis; L-threonine biosynthesis; L-threonine from L-aspartate: step 4/5. In terms of biological role, catalyzes the ATP-dependent phosphorylation of L-homoserine to L-homoserine phosphate. This chain is Homoserine kinase, found in Staphylococcus saprophyticus subsp. saprophyticus (strain ATCC 15305 / DSM 20229 / NCIMB 8711 / NCTC 7292 / S-41).